The chain runs to 975 residues: 26S proteasome non-ATPase regulatory subunit 1 (975 aa).

The interval 272 to 303 (EKKSTTTTTTTPASDSMEIDIDSGNEKSGGSS) is disordered. 10 PC repeats span residues 393–426 (SAISSLGVINKGHIKESKSLLKTYLPGASVNQTP), 431–464 (GSLYALGLIHASHGEEIIDYLVEKLHINNAILHH), 465–499 (GASLGLGLAAMATGRDDLYEDLKSVLYNDDAVSGE), 500–534 (AAGLAMGLVMLGSGAKKAIEEMLAYAHETQHEKTI), 536–569 (SLSMGLAFLMYGKEESADTLIEQMIGDKDPLIRY), 570–605 (GGMYAIAFAYCGTGHNDALRKLLHVAVSDGTDSVRR), 606–638 (AAVTCIGFVLSRQPEKCPKAIALLAESYNPHVR), 640–674 (GAAFALGIACAGTGQRDALEILKSLTTDSVGYVKQ), 675–715 (AAWI…DSMS), and 718–748 (GAVLAFGVIDAGGRNSTIQLHSPSGHKNMNA). 2 disordered regions span residues 832-882 (SSRS…KSNP) and 922-975 (PEQL…EFTE). 2 stretches are compositionally biased toward basic and acidic residues: residues 842-880 (DVEKKEKEEKEAKEKEAKEKEEKEAAKAEEKEPLFERKS) and 926-935 (VVKEKPETKQ). Residues 944–961 (TATATASLPNATTTTSPT) show a composition bias toward low complexity.

This sequence belongs to the proteasome subunit S1 family.

Acts as a regulatory subunit of the 26 proteasome which is involved in the ATP-dependent degradation of ubiquitinated proteins. The sequence is that of 26S proteasome non-ATPase regulatory subunit 1 (psmD1) from Dictyostelium discoideum (Social amoeba).